A 116-amino-acid polypeptide reads, in one-letter code: Large ribosomal subunit protein uL18 (116 aa).

It belongs to the universal ribosomal protein uL18 family. Part of the 50S ribosomal subunit; part of the 5S rRNA/L5/L18/L25 subcomplex. Contacts the 5S and 23S rRNAs.

In terms of biological role, this is one of the proteins that bind and probably mediate the attachment of the 5S RNA into the large ribosomal subunit, where it forms part of the central protuberance. The polypeptide is Large ribosomal subunit protein uL18 (Psychrobacter arcticus (strain DSM 17307 / VKM B-2377 / 273-4)).